The chain runs to 64 residues: Large ribosomal subunit protein bL35 (64 aa).

The tract at residues 1–54 (MPKIKSNSGAAKRFKKTAHGFKHKQSFRSHILTKKSTKRKRQLRGMKQIHDADK) is disordered. Basic residues predominate over residues 12 to 44 (KRFKKTAHGFKHKQSFRSHILTKKSTKRKRQLR).

It belongs to the bacterial ribosomal protein bL35 family.

The sequence is that of Large ribosomal subunit protein bL35 from Chromohalobacter salexigens (strain ATCC BAA-138 / DSM 3043 / CIP 106854 / NCIMB 13768 / 1H11).